Consider the following 491-residue polypeptide: MSALLSESDLNDFISPALACVKPTQVSGGKKDNVNMNGEYEVSTEPDQLEKVSITLSDCLACSGCITSSEEILLSSQSHSVFLKNWGKLSQQQDKFLVVSVSPQCRLSLAQYYGLTLEAADLCLMNFFQKHFQCKYMVGTEMGRIISISKTVEKIIAHKKQKENTGADRKPLLSAVCPGFLIYTEKTKPQLVPMLLNVKSPQQITGSLIRATFESLAIARESFYHLSLMPCFDKKLEASRPESLDDGIDCVITPREIVTMLQELNLDFKSFLTEDTSLYGRLSPPGWDPRVHWASNLGGTCGGYAYQYVTAVQRLHPGSQMIVLEGRNSDIVEYRLLHDDRIIAAASELSGFRNIQNLVRKLTSGSGSERKRNITALRKRRTGPKANSREMAAATAATADPYHSDYIEVNACPGACMNGGGLLNGEQNSLKRKQLVQTLNKRHGEELAMVDPLTLGPKLEEAAARPLSLEYVFAPVKQAVEKDLVSVGSTW.

Residues cysteine 20, cysteine 59, cysteine 62, cysteine 65, cysteine 177, cysteine 231, cysteine 412, and cysteine 416 each contribute to the [4Fe-4S] cluster site.

This sequence belongs to the NARF family. Interacts with CIA1.

It is found in the cytoplasm. Its subcellular location is the nucleus. In terms of biological role, essential component of a cytosolic Fe/S protein assembly machinery. Required for maturation of extramitochondrial Fe/S proteins. May play a role in the transfer of pre-assembled Fe/S clusters to target apoproteins. The protein is Cytosolic Fe-S cluster assembly factor NAR1 (NAR1) of Saccharomyces cerevisiae (strain ATCC 204508 / S288c) (Baker's yeast).